A 274-amino-acid chain; its full sequence is Diaminopimelate epimerase (274 aa).

Residues Asn11, Gln44, and Asn64 each contribute to the substrate site. Cys73 acts as the Proton donor in catalysis. Substrate-binding positions include 74–75, Asn157, Asn190, and 208–209; these read GN and ER. Residue Cys217 is the Proton acceptor of the active site. Residue 218-219 coordinates substrate; sequence GS.

The protein belongs to the diaminopimelate epimerase family. In terms of assembly, homodimer.

The protein localises to the cytoplasm. The catalysed reaction is (2S,6S)-2,6-diaminopimelate = meso-2,6-diaminopimelate. The protein operates within amino-acid biosynthesis; L-lysine biosynthesis via DAP pathway; DL-2,6-diaminopimelate from LL-2,6-diaminopimelate: step 1/1. Functionally, catalyzes the stereoinversion of LL-2,6-diaminopimelate (L,L-DAP) to meso-diaminopimelate (meso-DAP), a precursor of L-lysine and an essential component of the bacterial peptidoglycan. This Erwinia tasmaniensis (strain DSM 17950 / CFBP 7177 / CIP 109463 / NCPPB 4357 / Et1/99) protein is Diaminopimelate epimerase.